A 214-amino-acid chain; its full sequence is Histone H1.1 (214 aa).

Positions 1-43 (MSETAPVPQPASVAPEKPAATKKTRKPAKAAVPRKKPAGPSVS) are disordered. S2 bears the N-acetylserine mark. 2 positions are modified to phosphoserine: S2 and S12. Position 17 is an N6-acetyllysine (K17). The segment covering 20 to 37 (ATKKTRKPAKAAVPRKKP) has biased composition (basic residues). Position 36 is an N6-(beta-hydroxybutyryl)lysine (K36). The 74-residue stretch at 38–111 (AGPSVSELIV…GAAGSFKLNK (74 aa)) folds into the H15 domain. A Phosphoserine modification is found at S43. At K54 the chain carries N6-(beta-hydroxybutyryl)lysine. At R56 the chain carries Citrulline. An N6-(beta-hydroxybutyryl)lysine modification is found at K66. S67 is modified (phosphoserine). At K77 the chain carries N6-acetyllysine. An N6-(beta-hydroxybutyryl)lysine modification is found at K87. The residue at position 92 (K92) is an N6-(beta-hydroxybutyryl)lysine; alternate. N6-acetyllysine; alternate is present on K92. Residues 93 to 214 (GTLVQTKGTG…KPKKAAPKKK (122 aa)) form a disordered region. S106 carries the post-translational modification Phosphoserine. K108 is modified (N6-(beta-hydroxybutyryl)lysine). The span at 116–144 (KASTTKVTVKAKASGAAKKPKKTAGAAAK) shows a compositional bias: low complexity. At K121 the chain carries N6-acetyllysine. 2 stretches are compositionally biased toward basic residues: residues 145-179 (KTVKTPKKPKKPAVSKKTSSKSPKKPKVVKAKKVA) and 186-214 (KAVKPKAAKVKVTKPKTPAKPKKAAPKKK). T202 carries the phosphothreonine modification.

Belongs to the histone H1/H5 family. As to quaternary structure, interacts with DFFB. Post-translationally, H1 histones are progressively phosphorylated during the cell cycle, becoming maximally phosphorylated during late G2 phase and M phase, and being dephosphorylated sharply thereafter. In terms of processing, citrullination at Arg-56 (H1R54ci) by PADI4 takes place within the DNA-binding site of H1 and results in its displacement from chromatin and global chromatin decondensation, thereby promoting pluripotency and stem cell maintenance.

Its subcellular location is the nucleus. It is found in the chromosome. Its function is as follows. H1 histones bind to linker DNA between nucleosomes forming the macromolecular structure known as the chromatin fiber. H1 histones are necessary for the condensation of nucleosome chains into higher-order structured fibers. Also acts as a regulator of individual gene transcription through chromatin remodeling. The chain is Histone H1.1 from Rattus norvegicus (Rat).